The following is a 382-amino-acid chain: Na(+)/H(+) antiporter NhaA (382 aa).

Helical transmembrane passes span 5 to 25 (INLL…ALAW), 42 to 62 (FGGV…FFGI), 88 to 108 (LATL…NAVI), 116 to 136 (GWGI…RLVF), 145 to 165 (FLLL…AVFY), 169 to 189 (VHPT…AAYI), 261 to 281 (IVVD…RFSS), 282 to 302 (VGTA…AGIL), 327 to 347 (TGLV…VAFV), and 353 to 373 (GAAK…VALG).

This sequence belongs to the NhaA Na(+)/H(+) (TC 2.A.33) antiporter family.

It localises to the cell inner membrane. It catalyses the reaction Na(+)(in) + 2 H(+)(out) = Na(+)(out) + 2 H(+)(in). Its function is as follows. Na(+)/H(+) antiporter that extrudes sodium in exchange for external protons. This Geobacter metallireducens (strain ATCC 53774 / DSM 7210 / GS-15) protein is Na(+)/H(+) antiporter NhaA.